Reading from the N-terminus, the 251-residue chain is Duodenase-1 (251 aa).

The first 17 residues, 1-17, serve as a signal peptide directing secretion; that stretch reads MVLLLLLVALLSPTGEA. The propeptide occupies 18-19; the sequence is GK. A Peptidase S1 domain is found at 20-242; that stretch reads IIGGHEAKPH…SFLSWIHSTM (223 aa). A disulfide bridge connects residues Cys-48 and Cys-64. His-63 functions as the Charge relay system in the catalytic mechanism. Residue Asn-70 is glycosylated (N-linked (GlcNAc...) asparagine). Residue Asp-107 is the Charge relay system of the active site. 2 disulfides stabilise this stretch: Cys-141–Cys-207 and Cys-172–Cys-186. Catalysis depends on Ser-201, which acts as the Charge relay system.

This sequence belongs to the peptidase S1 family. In terms of assembly, monomer.

Protease which has both trypsin-like and chymotrypsin-like activities. Shows a preferential cleavage after Lys, Arg, Tyr, Phe, and Leu residues. The polypeptide is Duodenase-1 (BDMD1) (Bos taurus (Bovine)).